The sequence spans 353 residues: Phosphate acyltransferase (353 aa).

The protein belongs to the PlsX family. Homodimer. Probably interacts with PlsY.

It localises to the cytoplasm. The enzyme catalyses a fatty acyl-[ACP] + phosphate = an acyl phosphate + holo-[ACP]. The protein operates within lipid metabolism; phospholipid metabolism. Functionally, catalyzes the reversible formation of acyl-phosphate (acyl-PO(4)) from acyl-[acyl-carrier-protein] (acyl-ACP). This enzyme utilizes acyl-ACP as fatty acyl donor, but not acyl-CoA. This Rhodopseudomonas palustris (strain BisB5) protein is Phosphate acyltransferase.